The chain runs to 156 residues: Aspartate carbamoyltransferase regulatory chain (156 aa).

Residues Cys-107, Cys-112, Cys-137, and Cys-140 each contribute to the Zn(2+) site.

It belongs to the PyrI family. Contains catalytic and regulatory chains. The cofactor is Zn(2+).

Its function is as follows. Involved in allosteric regulation of aspartate carbamoyltransferase. In Methanopyrus kandleri (strain AV19 / DSM 6324 / JCM 9639 / NBRC 100938), this protein is Aspartate carbamoyltransferase regulatory chain.